The sequence spans 180 residues: Acireductone dioxygenase (180 aa).

Fe(2+)-binding residues include H99, H101, E105, and H145. Residues H99, H101, E105, and H145 each coordinate Ni(2+).

Belongs to the acireductone dioxygenase (ARD) family. In terms of assembly, monomer. Fe(2+) serves as cofactor. The cofactor is Ni(2+).

It catalyses the reaction 1,2-dihydroxy-5-(methylsulfanyl)pent-1-en-3-one + O2 = 3-(methylsulfanyl)propanoate + CO + formate + 2 H(+). The catalysed reaction is 1,2-dihydroxy-5-(methylsulfanyl)pent-1-en-3-one + O2 = 4-methylsulfanyl-2-oxobutanoate + formate + 2 H(+). Its pathway is amino-acid biosynthesis; L-methionine biosynthesis via salvage pathway; L-methionine from S-methyl-5-thio-alpha-D-ribose 1-phosphate: step 5/6. In terms of biological role, catalyzes 2 different reactions between oxygen and the acireductone 1,2-dihydroxy-3-keto-5-methylthiopentene (DHK-MTPene) depending upon the metal bound in the active site. Fe-containing acireductone dioxygenase (Fe-ARD) produces formate and 2-keto-4-methylthiobutyrate (KMTB), the alpha-ketoacid precursor of methionine in the methionine recycle pathway. Ni-containing acireductone dioxygenase (Ni-ARD) produces methylthiopropionate, carbon monoxide and formate, and does not lie on the methionine recycle pathway. The protein is Acireductone dioxygenase of Geobacillus thermodenitrificans (strain NG80-2).